The chain runs to 224 residues: Putative O-methyltransferase MUL_4520 (224 aa).

The span at 1–11 shows a compositional bias: polar residues; that stretch reads MHGTDSSSDTP. The tract at residues 1 to 20 is disordered; it reads MHGTDSSSDTPGQPAPSRAE. Residues V51, E73, 75-76, S81, D99, and I100 each bind S-adenosyl-L-methionine; that span reads GT. Substrate is bound at residue D147. S-adenosyl-L-methionine is bound at residue D149.

Belongs to the class I-like SAM-binding methyltransferase superfamily. Cation-dependent O-methyltransferase family.

This Mycobacterium ulcerans (strain Agy99) protein is Putative O-methyltransferase MUL_4520.